Consider the following 483-residue polypeptide: Argininosuccinate lyase (483 aa).

The protein belongs to the lyase 1 family. Argininosuccinate lyase subfamily.

The protein resides in the cytoplasm. It carries out the reaction 2-(N(omega)-L-arginino)succinate = fumarate + L-arginine. Its pathway is amino-acid biosynthesis; L-arginine biosynthesis; L-arginine from L-ornithine and carbamoyl phosphate: step 3/3. This chain is Argininosuccinate lyase, found in Archaeoglobus fulgidus (strain ATCC 49558 / DSM 4304 / JCM 9628 / NBRC 100126 / VC-16).